Consider the following 847-residue polypeptide: MDKRLLVKRTLGCVCAATLMGAILATHHDSLISVKAEEKTVQTGKTDQQIGAKLVQEIREGKRGPLYAGYFRTWHDRASTGADGKQQHPENTMAEVPKEVDILFVFHDHTASDSPFWSELKDSYVHKLHQQGTALVQTIGVNELNGRTGLSKDYPDIPEGNKALAAAIVKTFVTDRGVDGLDIDIEHEFTNKRTPEEDARALNVFKEIAQLIGKNGSDKSKLLIMDTTLSVENNPIFKGIAEDLDYLLRQYYGSQGGEAEVDTINSDWNQYQNYIDASQFMIGFSFFEESAPKGNLWFDVNEYDPKNPERGKDIEGTRAKKYAEWQPSTGGLKAGIFSYAIDRDGVAHVGKEYSQRTYQELEAGLKKHPVVDNISHTDYTVSRKLKALMAEDKRYDVIDQKDIPDAALREQVIQQVGQYKGDLERYNKTLVLTVDKIHSLKGLEKLSHLQKLELCQLSNVKEVTPDILPESMKKDAELVMTGMTGLEKLNLRGLNRQTLDGIDVNGLTHLTSFDISHNSLDLSEKSADRKLLMTLMEQVSNHQKITVKNTAFENQKPKGYYPQTYDTKEGHYDVDNAEHDILTDFVFGTVTKRDTFIGDEEAFAMYKEGAIDGRQYVAKDYTYEAFRKDYQGYKVHLTASNLGESDTSKVTATTDETYLVDVFDGEKIVPHMTLHVGNGATIMENLAKGAKVIGTSGDISLAEKVVDGVVADSFWTWDTKNWIAFDLNSQVIAKEWRLFNGETDPRFKDKELNIQKGRLQILKDKTIHLENMSKDERDSYLADEQNWITVSEITSNQKIYNGSITDITSRYWRFCVDEGVSSKSPQYTELQILGQRLSSDIASTVQD.

An N-terminal signal peptide occupies residues 1–36; it reads MDKRLLVKRTLGCVCAATLMGAILATHHDSLISVKA. In terms of domain architecture, GH18 spans 65–377; that stretch reads PLYAGYFRTW…HPVVDNISHT (313 aa). A glycoprotein is bound at residue H107. E186 acts as the Proton donor in catalysis. 7 residues coordinate a glycoprotein: E188, Q250, Y252, E288, E289, N295, and Y339. 4 LRR repeats span residues 423–446, 447–470, 483–506, and 507–530; these read LERY…LEKL, SHLQ…ILPE, MTGL…DVNG, and LTHL…ADRK. The carbohydrate-binding module (CBM) stretch occupies residues 683 to 836; the sequence is MENLAKGAKV…YTELQILGQR (154 aa). Ca(2+)-binding residues include K704, D707, and E829.

It belongs to the glycosyl hydrolase 18 family.

Its subcellular location is the secreted. The protein localises to the host extracellular space. The enzyme catalyses an N(4)-(oligosaccharide-(1-&gt;3)-[oligosaccharide-(1-&gt;6)]-beta-D-Man-(1-&gt;4)-beta-D-GlcNAc-(1-&gt;4)-alpha-D-GlcNAc)-L-asparaginyl-[protein] + H2O = an oligosaccharide-(1-&gt;3)-[oligosaccharide-(1-&gt;6)]-beta-D-Man-(1-&gt;4)-D-GlcNAc + N(4)-(N-acetyl-beta-D-glucosaminyl)-L-asparaginyl-[protein]. In terms of biological role, endoglucosidase that acts as a host immune evasion factor by mediating hydrolysis of the N-linked glycan from the Fc region of host immunoglobulin-gamma (IgG) during infection. Specifically catalyzes the hydrolysis of the beta-1,4 linkage between the first two N-acetylglucosamine residues of the complex-type N-linked glycan located on 'Asn-297' of the Fc region of IgG antibodies (IGHG1, IGHG2, IGHG3 or IGHG4), thereby preventing interaction between IgGs and Fc receptors and ability to activate the complement pathway. Shows a specificity for biantennary complex type N-glycans; does neither cleave larger complex type glycans nor oligomannose and nor hybrid-type glycans. Specifically acts on IgGs; does not act on immunoglobulin alpha, beta, delta or mu. The polypeptide is Endo-beta-N-acetylglucosaminidase EndoSd (Streptococcus dysgalactiae).